Here is a 392-residue protein sequence, read N- to C-terminus: MKFVDEATILVVAGDGGNGCVSFRREKYIPKGGPDGGDGGDGGDVWLEADENLNTLIDYRFEKSFRAERGQNGQSRDCTGKRGKDVTVKVPVGTRVIDQGTGETMGDMTKHGQRLMVAKGGWHGLGNTRFKSSVNRTPRQKTMGTPGDKRDLQLELMLLADVGMLGMPNAGKSTFIRAVSAAKPKVADYPFTTLVPSLGVVRMDNEKSFVVADIPGLIEGAAEGAGLGIRFLKHLERCRVLLHLIDIDPIDGSDPVENARIIIGELEKYSEKLASKPRWLVFNKIDLMDKAEAEAKAKAIAEALGWEEKFYLISAASQQGVKELCWDVMTFIIENPIVQAEEEQKPEKVEFMWDDYHRQQLEEAEAEAEDDEDWDDDWDEDDEEGVEFIYKR.

In terms of domain architecture, Obg spans 1–159; that stretch reads MKFVDEATIL…RDLQLELMLL (159 aa). Residues 127-148 form a disordered region; it reads NTRFKSSVNRTPRQKTMGTPGD. A compositionally biased stretch (polar residues) spans 129–143; the sequence is RFKSSVNRTPRQKTM. An OBG-type G domain is found at 160–333; the sequence is ADVGMLGMPN…LCWDVMTFII (174 aa). GTP-binding positions include 166 to 173, 191 to 195, 213 to 216, 283 to 286, and 314 to 316; these read GMPNAGKS, FTTLV, DIPG, NKID, and SAA. Residues Ser-173 and Thr-193 each coordinate Mg(2+). Acidic residues predominate over residues 362–386; sequence EEAEAEAEDDEDWDDDWDEDDEEGV. The interval 362–392 is disordered; that stretch reads EEAEAEAEDDEDWDDDWDEDDEEGVEFIYKR.

Belongs to the TRAFAC class OBG-HflX-like GTPase superfamily. OBG GTPase family. As to quaternary structure, monomer. Requires Mg(2+) as cofactor.

The protein localises to the cytoplasm. An essential GTPase which binds GTP, GDP and possibly (p)ppGpp with moderate affinity, with high nucleotide exchange rates and a fairly low GTP hydrolysis rate. Plays a role in control of the cell cycle, stress response, ribosome biogenesis and in those bacteria that undergo differentiation, in morphogenesis control. In Klebsiella pneumoniae subsp. pneumoniae (strain ATCC 700721 / MGH 78578), this protein is GTPase Obg.